A 157-amino-acid polypeptide reads, in one-letter code: Ribosomal RNA large subunit methyltransferase H (157 aa).

S-adenosyl-L-methionine is bound by residues L75, G106, and 125 to 130 (FSELTF).

Belongs to the RNA methyltransferase RlmH family. As to quaternary structure, homodimer.

The protein resides in the cytoplasm. It catalyses the reaction pseudouridine(1915) in 23S rRNA + S-adenosyl-L-methionine = N(3)-methylpseudouridine(1915) in 23S rRNA + S-adenosyl-L-homocysteine + H(+). Its function is as follows. Specifically methylates the pseudouridine at position 1915 (m3Psi1915) in 23S rRNA. This chain is Ribosomal RNA large subunit methyltransferase H, found in Malacoplasma penetrans (strain HF-2) (Mycoplasma penetrans).